The chain runs to 120 residues: Non-specific lipid-transfer protein 2 (120 aa).

Residues 1–25 (MATSMKLACVALVMCMVVIAPMAEA) form the signal peptide. 4 cysteine pairs are disulfide-bonded: Cys-29–Cys-78, Cys-39–Cys-55, Cys-56–Cys-101, and Cys-76–Cys-115.

This sequence belongs to the plant LTP family. Expressed in roots, stem, leaves and tendrils of the mature plant.

In terms of biological role, plant non-specific lipid-transfer proteins transfer phospholipids as well as galactolipids across membranes. May play a role in wax or cutin deposition in the cell walls of expanding epidermal cells and certain secretory tissues. In Pisum sativum (Garden pea), this protein is Non-specific lipid-transfer protein 2.